Consider the following 305-residue polypeptide: Ribonuclease BN (305 aa).

Zn(2+)-binding residues include H64, H66, D68, H69, H141, D212, and H270. The active-site Proton acceptor is the D68.

This sequence belongs to the RNase Z family. RNase BN subfamily. In terms of assembly, homodimer. It depends on Zn(2+) as a cofactor.

Its function is as follows. Zinc phosphodiesterase, which has both exoribonuclease and endoribonuclease activities. The protein is Ribonuclease BN of Citrobacter koseri (strain ATCC BAA-895 / CDC 4225-83 / SGSC4696).